We begin with the raw amino-acid sequence, 478 residues long: Proline--tRNA ligase (478 aa).

It belongs to the class-II aminoacyl-tRNA synthetase family. ProS type 3 subfamily. As to quaternary structure, homodimer.

It localises to the cytoplasm. It catalyses the reaction tRNA(Pro) + L-proline + ATP = L-prolyl-tRNA(Pro) + AMP + diphosphate. In terms of biological role, catalyzes the attachment of proline to tRNA(Pro) in a two-step reaction: proline is first activated by ATP to form Pro-AMP and then transferred to the acceptor end of tRNA(Pro). This chain is Proline--tRNA ligase, found in Clostridium botulinum (strain ATCC 19397 / Type A).